A 548-amino-acid polypeptide reads, in one-letter code: Luciferin 4-monooxygenase (548 aa).

A Microbody targeting signal motif is present at residues 546 to 548 (AKM).

This sequence belongs to the ATP-dependent AMP-binding enzyme family. Homodimer. Requires Mg(2+) as cofactor.

The protein resides in the peroxisome. The enzyme catalyses firefly D-luciferin + ATP + O2 = firefly oxyluciferin + hnu + AMP + CO2 + diphosphate. Inhibited by ATP analogs and sodium deoxycholate. Activated by choline-containing phospholipids. Produces green light with a wavelength of 570 nm. The polypeptide is Luciferin 4-monooxygenase (Luciola mingrelica (Southern Russian firefly)).